The following is a 327-amino-acid chain: Putative hydroxymethylpyrimidine/phosphomethylpyrimidine kinase C18B5.05c (327 aa).

4-amino-5-hydroxymethyl-2-methylpyrimidine is bound at residue Gln54.

Belongs to the ThiD family.

The protein resides in the cytoplasm. The protein localises to the nucleus. It catalyses the reaction 4-amino-5-hydroxymethyl-2-methylpyrimidine + ATP = 4-amino-2-methyl-5-(phosphooxymethyl)pyrimidine + ADP + H(+). The enzyme catalyses 4-amino-2-methyl-5-(phosphooxymethyl)pyrimidine + ATP = 4-amino-2-methyl-5-(diphosphooxymethyl)pyrimidine + ADP. It functions in the pathway cofactor biosynthesis; thiamine diphosphate biosynthesis; 4-amino-2-methyl-5-diphosphomethylpyrimidine from 5-amino-1-(5-phospho-D-ribosyl)imidazole: step 2/3. Its pathway is cofactor biosynthesis; thiamine diphosphate biosynthesis; 4-amino-2-methyl-5-diphosphomethylpyrimidine from 5-amino-1-(5-phospho-D-ribosyl)imidazole: step 3/3. Functionally, catalyzes the phosphorylation of hydroxymethylpyrimidine phosphate (HMP-P) to HMP-PP, and of HMP to HMP-P. The sequence is that of Putative hydroxymethylpyrimidine/phosphomethylpyrimidine kinase C18B5.05c from Schizosaccharomyces pombe (strain 972 / ATCC 24843) (Fission yeast).